The sequence spans 163 residues: Xanthine-guanine phosphoribosyltransferase (163 aa).

Residues 43–44 (RG) and 95–103 (DDLVDTGGT) each bind 5-phospho-alpha-D-ribose 1-diphosphate. A Mg(2+)-binding site is contributed by Asp-96. Residues Asp-99 and Ile-142 each coordinate guanine. 2 residues coordinate xanthine: Asp-99 and Ile-142. Residues 99–103 (DTGGT) and 141–142 (WI) each bind GMP.

The protein belongs to the purine/pyrimidine phosphoribosyltransferase family. XGPT subfamily. Homotetramer. The cofactor is Mg(2+).

It is found in the cell inner membrane. It catalyses the reaction GMP + diphosphate = guanine + 5-phospho-alpha-D-ribose 1-diphosphate. It carries out the reaction XMP + diphosphate = xanthine + 5-phospho-alpha-D-ribose 1-diphosphate. The catalysed reaction is IMP + diphosphate = hypoxanthine + 5-phospho-alpha-D-ribose 1-diphosphate. Its pathway is purine metabolism; GMP biosynthesis via salvage pathway; GMP from guanine: step 1/1. It functions in the pathway purine metabolism; XMP biosynthesis via salvage pathway; XMP from xanthine: step 1/1. Its function is as follows. Purine salvage pathway enzyme that catalyzes the transfer of the ribosyl-5-phosphate group from 5-phospho-alpha-D-ribose 1-diphosphate (PRPP) to the N9 position of the 6-oxopurines guanine and xanthine to form the corresponding ribonucleotides GMP (guanosine 5'-monophosphate) and XMP (xanthosine 5'-monophosphate), with the release of PPi. To a lesser extent, also acts on hypoxanthine. This is Xanthine-guanine phosphoribosyltransferase from Nitratidesulfovibrio vulgaris (strain DP4) (Desulfovibrio vulgaris).